The following is a 401-amino-acid chain: Glucose/mannose transporter GlcP (401 aa).

A run of 12 helical transmembrane segments spans residues 11 to 31 (AFFFTVGIIHISTGSLTPFLL), 43 to 63 (VIIFFQFTGFLSGVLIAPLMI), 78 to 98 (IMLVALSIFFLTKDWYYIIVM), 99 to 119 (AFLLGYGAGTLETTVGSFVIA), 132 to 152 (EVLFGLGALSFPLLINSFIDI), 156 to 176 (FLPYYCIFTFLFVLFVGWLIF), 212 to 232 (LGFFVFFAFLYAGIETNFANF), 247 to 267 (LISVSFFWVGIIIGRILIGFV), 278 to 298 (LFSCSCLIVLLIAFSYISNPI), 306 to 326 (LIGLSIAGIFPIALTLASIII), 336 to 356 (LFIASASFGGAIISFLIGWSL), and 360 to 380 (TILLTMGIFTTMAVILVGISV).

The protein belongs to the major facilitator superfamily.

Its subcellular location is the cell membrane. Its function is as follows. Can transport glucose, mannose, 2-deoxyglucose and methyl alpha-glucoside, but not galactose. In Bacillus subtilis (strain 168), this protein is Glucose/mannose transporter GlcP (glcP).